Here is a 731-residue protein sequence, read N- to C-terminus: Beta-galactosidase (731 aa).

The signal sequence occupies residues 1 to 23; that stretch reads MGVGIQTMWSILLLFSCIFSAAS. Glutamate 182 acts as the Proton donor in catalysis. Glutamate 251 (nucleophile) is an active-site residue. Residue asparagine 459 is glycosylated (N-linked (GlcNAc...) asparagine).

The protein belongs to the glycosyl hydrolase 35 family.

The protein localises to the secreted. It localises to the extracellular space. Its subcellular location is the apoplast. The enzyme catalyses Hydrolysis of terminal non-reducing beta-D-galactose residues in beta-D-galactosides.. Involved in cell wall degradation. Degrades polysaccharides containing beta-(1--&gt;4)-linked galactans, acting as an exo-(1--&gt;4)-beta-D-galactanase. The polypeptide is Beta-galactosidase (Malus domestica (Apple)).